A 198-amino-acid chain; its full sequence is Protein XA-1 (198 aa).

Positions 1 to 18 (MFFYVLLLALMAQGWSLP) are cleaved as a signal peptide. The interval 17–198 (LPQGKTGEDS…KHGQEQGKKH (182 aa)) is disordered. Residues 29-44 (FRPPSPPMGPSLPPPV) are compositionally biased toward pro residues. Over residues 46-59 (HDLHRPSGHPEEFR) the composition is skewed to basic and acidic residues. Positions 76–86 (GRPKRDLHHGK) are enriched in basic residues. Residues 95-104 (HTGEVLHHTD) are compositionally biased toward basic and acidic residues. A compositionally biased stretch (basic residues) spans 134 to 145 (HGRHRRDLHHGK). Basic and acidic residues predominate over residues 181–198 (NSSEEKRPKHGQEQGKKH).

As to expression, expressed in the periphery of the cement gland as well as in the region of the hatching gland.

The protein localises to the secreted. In Xenopus laevis (African clawed frog), this protein is Protein XA-1.